The sequence spans 378 residues: Erythronate-4-phosphate dehydrogenase (378 aa).

The substrate site is built by serine 45 and threonine 66. NAD(+) contacts are provided by aspartate 146 and threonine 175. Residue arginine 208 is part of the active site. Aspartate 232 is a binding site for NAD(+). The active site involves glutamate 237. Residue histidine 254 is the Proton donor of the active site. Glycine 257 contacts NAD(+). Position 258 (tyrosine 258) interacts with substrate.

The protein belongs to the D-isomer specific 2-hydroxyacid dehydrogenase family. PdxB subfamily. As to quaternary structure, homodimer.

The protein localises to the cytoplasm. The enzyme catalyses 4-phospho-D-erythronate + NAD(+) = (R)-3-hydroxy-2-oxo-4-phosphooxybutanoate + NADH + H(+). It participates in cofactor biosynthesis; pyridoxine 5'-phosphate biosynthesis; pyridoxine 5'-phosphate from D-erythrose 4-phosphate: step 2/5. In terms of biological role, catalyzes the oxidation of erythronate-4-phosphate to 3-hydroxy-2-oxo-4-phosphonooxybutanoate. In Cronobacter sakazakii (strain ATCC BAA-894) (Enterobacter sakazakii), this protein is Erythronate-4-phosphate dehydrogenase.